The following is a 207-amino-acid chain: 2,3-bisphosphoglycerate-dependent phosphoglycerate mutase (207 aa).

Substrate contacts are provided by residues arginine 10 to asparagine 17, threonine 23 to glycine 24, arginine 62, glutamate 89 to tyrosine 92, lysine 100, arginine 116 to arginine 117, and glycine 160 to asparagine 161. Catalysis depends on histidine 11, which acts as the Tele-phosphohistidine intermediate. The active-site Proton donor/acceptor is the glutamate 89.

Belongs to the phosphoglycerate mutase family. BPG-dependent PGAM subfamily. In terms of assembly, homodimer.

The catalysed reaction is (2R)-2-phosphoglycerate = (2R)-3-phosphoglycerate. Its pathway is carbohydrate degradation; glycolysis; pyruvate from D-glyceraldehyde 3-phosphate: step 3/5. Catalyzes the interconversion of 2-phosphoglycerate and 3-phosphoglycerate. The sequence is that of 2,3-bisphosphoglycerate-dependent phosphoglycerate mutase from Rhodopseudomonas palustris (strain BisB18).